Here is a 1418-residue protein sequence, read N- to C-terminus: Transcriptional regulator ADR1 (1418 aa).

Composition is skewed to low complexity over residues 34 to 44 and 68 to 93; these read TTTTANMSNTT and TSMSPSNSINSTNNNAAAAAATTTTS. Residues 34–96 form a disordered region; it reads TTTTANMSNT…AATTTTSKKS (63 aa). 2 C2H2-type zinc fingers span residues 117 to 139 and 145 to 168; these read FVCQVCTRAFARLEHLRRHERSH and FSCGVCQRKFSRRDLLLRHAQKLH. 5 disordered regions span residues 181–285, 403–426, 454–484, 1132–1167, and 1338–1362; these read KSIK…LDQR, SQHGSFSHQSTFSATDMGQTRSES, VAAHHHHQQQQQHQQHNHQHQPNQSSLGLSR, NSNSRNRSKNDPTNEINNKLNNNNNNNNDMNNNNSN, and TNTNTTNTITTTTTTDNGTKQNQHH. Positions 189–211 are enriched in acidic residues; that stretch reads GDDDDDDDDDDEEMANSEDENDH. A compositionally biased stretch (polar residues) spans 236-278; the sequence is NLFNSKQKPTKANTTKSKVAKLSTTTSRKNSTNPTRKNSSSLH. 3 stretches are compositionally biased toward low complexity: residues 462–477, 1145–1167, and 1338–1356; these read QQQQHQQHNHQHQPNQ, NEINNKLNNNNNNNNDMNNNNSN, and TNTNTTNTITTTTTTDNGT.

The protein localises to the nucleus. Its function is as follows. Transcription factor involved in the regulation of hyphal growth. The chain is Transcriptional regulator ADR1 (ADR1) from Candida albicans (strain SC5314 / ATCC MYA-2876) (Yeast).